The primary structure comprises 270 residues: 4-hydroxy-tetrahydrodipicolinate reductase (270 aa).

Residues G9–M14 and E35 contribute to the NAD(+) site. R36 contacts NADP(+). Residues G99–T101 and A123–F126 contribute to the NAD(+) site. The active-site Proton donor/acceptor is H156. H157 serves as a coordination point for (S)-2,3,4,5-tetrahydrodipicolinate. K160 acts as the Proton donor in catalysis. Residue G166 to T167 participates in (S)-2,3,4,5-tetrahydrodipicolinate binding.

Belongs to the DapB family.

It localises to the cytoplasm. It catalyses the reaction (S)-2,3,4,5-tetrahydrodipicolinate + NAD(+) + H2O = (2S,4S)-4-hydroxy-2,3,4,5-tetrahydrodipicolinate + NADH + H(+). It carries out the reaction (S)-2,3,4,5-tetrahydrodipicolinate + NADP(+) + H2O = (2S,4S)-4-hydroxy-2,3,4,5-tetrahydrodipicolinate + NADPH + H(+). Its pathway is amino-acid biosynthesis; L-lysine biosynthesis via DAP pathway; (S)-tetrahydrodipicolinate from L-aspartate: step 4/4. In terms of biological role, catalyzes the conversion of 4-hydroxy-tetrahydrodipicolinate (HTPA) to tetrahydrodipicolinate. This is 4-hydroxy-tetrahydrodipicolinate reductase from Haemophilus influenzae (strain 86-028NP).